A 517-amino-acid polypeptide reads, in one-letter code: U3 small nucleolar RNA-associated protein 15 homolog (517 aa).

WD repeat units lie at residues 36 to 75 (KEFGAVSKIDFSPLPPHNYAVTASTRVHIYGLHSQEPIRN), 78 to 117 (RFHDTAYGGSFRGDGKLLVAGSEEGLIRLFDIGGRVSLRQ), 120 to 159 (GHSKAVHATSFLSDGFRVLSGSDDLTCRVWDVASAVELSS), 162 to 202 (EHTD…SVMT), 204 to 242 (QHGQPVECVLLYPSEALLVSTGGRYVKVWDLLKGGQQLV), 246 to 285 (NHHKTVTCACLSSSNKLLTASLDRHVKVYNSSYKVVHNFD), and 287 to 324 (ASSILSLAVAPDDEAVAVGMTNGVLSIRHRKHKEEKEA).

Part of the small subunit (SSU) processome, composed of more than 70 proteins and the RNA chaperone small nucleolar RNA (snoRNA) U3. May be a component of the proposed t-UTP subcomplex of the ribosomal small subunit (SSU) processome.

Its subcellular location is the nucleus. It is found in the nucleolus. In terms of biological role, ribosome biogenesis factor. Involved in nucleolar processing of pre-18S ribosomal RNA. Required for optimal pre-ribosomal RNA transcription by RNA polymerase I. Part of the small subunit (SSU) processome, first precursor of the small eukaryotic ribosomal subunit. During the assembly of the SSU processome in the nucleolus, many ribosome biogenesis factors, an RNA chaperone and ribosomal proteins associate with the nascent pre-rRNA and work in concert to generate RNA folding, modifications, rearrangements and cleavage as well as targeted degradation of pre-ribosomal RNA by the RNA exosome. In Danio rerio (Zebrafish), this protein is U3 small nucleolar RNA-associated protein 15 homolog (utp15).